The primary structure comprises 128 residues: Small ribosomal subunit protein uS10 (128 aa).

Belongs to the universal ribosomal protein uS10 family.

This chain is Small ribosomal subunit protein uS10 (RPS20), found in Oryza sativa subsp. japonica (Rice).